The sequence spans 201 residues: Large ribosomal subunit protein uL4 (201 aa).

A disordered region spans residues threonine 43–glycine 71.

This sequence belongs to the universal ribosomal protein uL4 family. Part of the 50S ribosomal subunit.

One of the primary rRNA binding proteins, this protein initially binds near the 5'-end of the 23S rRNA. It is important during the early stages of 50S assembly. It makes multiple contacts with different domains of the 23S rRNA in the assembled 50S subunit and ribosome. In terms of biological role, forms part of the polypeptide exit tunnel. This chain is Large ribosomal subunit protein uL4, found in Psychromonas ingrahamii (strain DSM 17664 / CCUG 51855 / 37).